The primary structure comprises 184 residues: Helix-loop-helix protein ngn-1 (184 aa).

The segment at 1–55 is disordered; the sequence is MYHHSPFYPHHLQTGEQDLDMERENDMDQNSKNSTQKPVKREKRRYRCRKRSPAT. Residues 28–37 show a composition bias toward polar residues; it reads DQNSKNSTQK. Basic residues predominate over residues 38 to 52; it reads PVKREKRRYRCRKRS. The segment at 62 to 75 is basic motif; that stretch reads VRRDKANARERRRM. The region spanning 62 to 114 is the bHLH domain; that stretch reads VRRDKANARERRRMNSLNDALEHLRGILPALPDEPKMTKIETLRKAQEYIASL. A helix-loop-helix motif region spans residues 76–114; the sequence is NSLNDALEHLRGILPALPDEPKMTKIETLRKAQEYIASL. Positions 164–184 are disordered; the sequence is SNPPSQMYYHHHHQSPSFPHH. A compositionally biased stretch (basic residues) spans 172–184; it reads YHHHHQSPSFPHH.

As to quaternary structure, interacts with hlh-2; the interaction is direct.

The protein localises to the nucleus. Acts as a transcriptional regulator. Regulates expression of various genes, including homeobox protein unc-42 and helix-loop-helix protein hlh-34. Required for embryonic viability, neuromuscular development, organization of the nerve ring and neuronal cell body location. Regulates AIY neuron axon morphology and cell fate. Plays a role in cell autonomously establishing a neuronal left-right asymmetry. Involved in regulating glial specification. The protein is Helix-loop-helix protein ngn-1 of Caenorhabditis elegans.